Here is a 421-residue protein sequence, read N- to C-terminus: UDP-N-acetylglucosamine 1-carboxyvinyltransferase (421 aa).

22 to 23 (KN) contacts phosphoenolpyruvate. Arginine 91 is a binding site for UDP-N-acetyl-alpha-D-glucosamine. Cysteine 115 serves as the catalytic Proton donor. Cysteine 115 is modified (2-(S-cysteinyl)pyruvic acid O-phosphothioketal). UDP-N-acetyl-alpha-D-glucosamine is bound by residues 120 to 124 (RPIDL), aspartate 306, and isoleucine 328.

The protein belongs to the EPSP synthase family. MurA subfamily.

The protein resides in the cytoplasm. The catalysed reaction is phosphoenolpyruvate + UDP-N-acetyl-alpha-D-glucosamine = UDP-N-acetyl-3-O-(1-carboxyvinyl)-alpha-D-glucosamine + phosphate. It participates in cell wall biogenesis; peptidoglycan biosynthesis. Functionally, cell wall formation. Adds enolpyruvyl to UDP-N-acetylglucosamine. This chain is UDP-N-acetylglucosamine 1-carboxyvinyltransferase, found in Methylacidiphilum infernorum (isolate V4) (Methylokorus infernorum (strain V4)).